The primary structure comprises 353 residues: 4-hydroxy-3-methylbut-2-en-1-yl diphosphate synthase (flavodoxin) (353 aa).

Positions 265, 268, 300, and 307 each coordinate [4Fe-4S] cluster.

The protein belongs to the IspG family. It depends on [4Fe-4S] cluster as a cofactor.

The catalysed reaction is (2E)-4-hydroxy-3-methylbut-2-enyl diphosphate + oxidized [flavodoxin] + H2O + 2 H(+) = 2-C-methyl-D-erythritol 2,4-cyclic diphosphate + reduced [flavodoxin]. It functions in the pathway isoprenoid biosynthesis; isopentenyl diphosphate biosynthesis via DXP pathway; isopentenyl diphosphate from 1-deoxy-D-xylulose 5-phosphate: step 5/6. Functionally, converts 2C-methyl-D-erythritol 2,4-cyclodiphosphate (ME-2,4cPP) into 1-hydroxy-2-methyl-2-(E)-butenyl 4-diphosphate. In Sulfurihydrogenibium sp. (strain YO3AOP1), this protein is 4-hydroxy-3-methylbut-2-en-1-yl diphosphate synthase (flavodoxin).